We begin with the raw amino-acid sequence, 856 residues long: DNA gyrase subunit A (856 aa).

The region spanning 45 to 517 is the Topo IIA-type catalytic domain; that stretch reads LPDARDGLKP…DDGTVTHEDL (473 aa). Catalysis depends on tyrosine 133, which acts as the O-(5'-phospho-DNA)-tyrosine intermediate. Positions 544–550 match the GyrA-box motif; the sequence is QHRGGKG. The disordered stretch occupies residues 822 to 856; that stretch reads TVASVDTHPRTDDSSEADSGDGESESENATATTPS. Over residues 835–847 the composition is skewed to acidic residues; sequence SSEADSGDGESES.

This sequence belongs to the type II topoisomerase GyrA/ParC subunit family. In terms of assembly, heterotetramer, composed of two GyrA and two GyrB chains. In the heterotetramer, GyrA contains the active site tyrosine that forms a transient covalent intermediate with DNA, while GyrB binds cofactors and catalyzes ATP hydrolysis.

The protein resides in the cytoplasm. The catalysed reaction is ATP-dependent breakage, passage and rejoining of double-stranded DNA.. Its function is as follows. A type II topoisomerase that negatively supercoils closed circular double-stranded (ds) DNA in an ATP-dependent manner to modulate DNA topology and maintain chromosomes in an underwound state. Negative supercoiling favors strand separation, and DNA replication, transcription, recombination and repair, all of which involve strand separation. Also able to catalyze the interconversion of other topological isomers of dsDNA rings, including catenanes and knotted rings. Type II topoisomerases break and join 2 DNA strands simultaneously in an ATP-dependent manner. The sequence is that of DNA gyrase subunit A from Haloquadratum walsbyi (strain DSM 16790 / HBSQ001).